Reading from the N-terminus, the 404-residue chain is MQKEIVKTKKMVFGASCIASLKDGKTVFVPYSLPDEVLEISIVKEHKNYTEGKIEKILEVSPHRVEPRCPHFYVCGGCNLQTADDEYQHFLRKSMALEALDRALSLNKEKAVFEKQALEKSFFEKSIFVSGPDWDYRARFQFYIDKDGSLSLKENKSSGSVKIKDCPIAVPAIRNLLKSNLKEYTPNSRIHIFSDGEKIFTQDNAKDCEVRLAGKRIKFNPLGFFQSNLEMTEKLINTIFEYAEISSSVLDFYSGVGTFSLFAYDQAKEIHLVEHNKHALAYAQENFLINSSSSGIVREKKENGFPKIFYHALDGKNWAKTKESKLKFDTVFVDPPRIGIDKEALSWLCSSGTRQIFYISCDPVTFARDTASLLVSGYKLEKHFLFDFYPQTHHIETLGIFRKN.

The [4Fe-4S] cluster site is built by cysteine 69, cysteine 75, cysteine 78, and cysteine 166. S-adenosyl-L-methionine contacts are provided by glutamine 226, tyrosine 253, glutamate 274, and aspartate 334. Cysteine 361 (nucleophile) is an active-site residue.

It belongs to the class I-like SAM-binding methyltransferase superfamily. RNA M5U methyltransferase family.

This is an uncharacterized protein from Treponema denticola (strain ATCC 35405 / DSM 14222 / CIP 103919 / JCM 8153 / KCTC 15104).